Reading from the N-terminus, the 186-residue chain is Nucleoside diphosphate kinase 6 (186 aa).

Positions 19, 68, 96, 102, 116, and 126 each coordinate ATP. The active-site Pros-phosphohistidine intermediate is His-129.

Belongs to the NDK family. Mg(2+) serves as cofactor. Expressed at a moderately low level in many tissues. Most abundant in kidney, prostate, ovary, intestine, and spleen.

It carries out the reaction a 2'-deoxyribonucleoside 5'-diphosphate + ATP = a 2'-deoxyribonucleoside 5'-triphosphate + ADP. The enzyme catalyses a ribonucleoside 5'-diphosphate + ATP = a ribonucleoside 5'-triphosphate + ADP. Major role in the synthesis of nucleoside triphosphates other than ATP. The ATP gamma phosphate is transferred to the NDP beta phosphate via a ping-pong mechanism, using a phosphorylated active-site intermediate. Inhibitor of p53-induced apoptosis. This Homo sapiens (Human) protein is Nucleoside diphosphate kinase 6 (NME6).